Here is a 162-residue protein sequence, read N- to C-terminus: UPF0305 protein MmarC7_1691 (162 aa).

Belongs to the UPF0305 family.

The protein is UPF0305 protein MmarC7_1691 of Methanococcus maripaludis (strain C7 / ATCC BAA-1331).